The chain runs to 498 residues: Thiamine transporter 1 (498 aa).

N-acetylmethionine is present on Met-1. Residues 1-28 lie on the Cytoplasmic side of the membrane; it reads MDVPARVSRRAAAAAARMLLRTARVPRE. Residues 29–46 form a helical membrane-spanning segment; that stretch reads CWFLPTALLCAYGFFANL. The Extracellular portion of the chain corresponds to 47 to 71; it reads RPSEPFLTPYLLGPDKNLTERQVYN. Asn-63 is a glycosylation site (N-linked (GlcNAc...) asparagine). Residues 72–92 form a helical membrane-spanning segment; that stretch reads EIYPVWTYSYLLLLFPVFLAT. At 93–105 the chain is on the cytoplasmic side; sequence DYLRYKPVILLQG. A helical membrane pass occupies residues 106–126; sequence LSLIVTWFMLLYAQGLLAIQF. The Extracellular portion of the chain corresponds to 127-128; it reads LE. A helical transmembrane segment spans residues 129-149; that stretch reads FFYGIATATEIAYYSYIYTVV. Topologically, residues 150-164 are cytoplasmic; that stretch reads DLGMYQKVTSYCRSA. A helical membrane pass occupies residues 165 to 185; the sequence is TLVGFTVGSVLGQILVSVVGW. Position 186 (Ser-186) is a topological domain, extracellular. Residues 187 to 207 form a helical membrane-spanning segment; sequence LFSLNVISLTCVSVAFAVAWF. Topologically, residues 208-295 are cytoplasmic; the sequence is LPMPQKSLFF…DFLMCYSSRP (88 aa). The residue at position 222 (Ser-222) is a Phosphoserine. A helical membrane pass occupies residues 296-316; that stretch reads LLCWSVWWALSTCGYFQVVNY. The Extracellular segment spans residues 317-334; it reads AQGLWEKVMPSQNADIYN. The helical transmembrane segment at 335-355 threads the bilayer; the sequence is GGVEAVSTLLGASAVFAVGYI. Residues 356–360 lie on the Cytoplasmic side of the membrane; it reads KLSWS. The helical transmembrane segment at 361-381 threads the bilayer; that stretch reads TWGEMTLFLCSLLIAAAVYVM. At 382–386 the chain is on the extracellular side; that stretch reads DTVQS. The helical transmembrane segment at 387–407 threads the bilayer; it reads IWVCYASYVVFRIIYMVLITI. At 408–423 the chain is on the cytoplasmic side; it reads ATFQIAANLSMERYAL. A helical transmembrane segment spans residues 424–444; sequence VFGVNTFIALALQTLLTLIVV. Topologically, residues 445-456 are extracellular; sequence DARGLGLCITTQ. A helical transmembrane segment spans residues 457-477; the sequence is FLIYASYFAAISVVFLANGIV. Residues 478 to 498 are Cytoplasmic-facing; that stretch reads SIIKKCRKQEDPSSSPQASTS.

This sequence belongs to the reduced folate carrier (RFC) transporter (TC 2.A.48) family. As to quaternary structure, interacts with TSPAN1; this interaction increases the stability of SLC19A2. Interacts with TMEM63B. As to expression, expressed in liver. Expressed in cochlear hair cells and duodenum (at protein level). Detected in pancreatic acinar cells (at protein level). Also expressed strongly in pancreatic islet cells. Expressed in the testis. In terms of tissue distribution, very highly expressed in liver, and also detected at lower levels in heart, testis, kidney, brain and spleen. Expressed at low levels in liver and spleen.

The protein resides in the cell membrane. The catalysed reaction is thiamine(out) + H(+)(in) = thiamine(in) + H(+)(out). The enzyme catalyses pyridoxine(out) + n H(+)(out) = pyridoxine(in) + n H(+)(in). Its function is as follows. High-affinity transporter for the intake of thiamine. Essential for spermatogenesis. Mediates H(+)-dependent pyridoxine transport. This is Thiamine transporter 1 from Mus musculus (Mouse).